The chain runs to 158 residues: UPF0260 protein RL1394 (158 aa).

It belongs to the UPF0260 family.

The protein is UPF0260 protein RL1394 of Rhizobium johnstonii (strain DSM 114642 / LMG 32736 / 3841) (Rhizobium leguminosarum bv. viciae).